The primary structure comprises 290 residues: Glycine--tRNA ligase alpha subunit (290 aa).

Belongs to the class-II aminoacyl-tRNA synthetase family. In terms of assembly, tetramer of two alpha and two beta subunits.

The protein resides in the cytoplasm. It catalyses the reaction tRNA(Gly) + glycine + ATP = glycyl-tRNA(Gly) + AMP + diphosphate. This is Glycine--tRNA ligase alpha subunit from Fusobacterium nucleatum subsp. nucleatum (strain ATCC 25586 / DSM 15643 / BCRC 10681 / CIP 101130 / JCM 8532 / KCTC 2640 / LMG 13131 / VPI 4355).